The following is a 274-amino-acid chain: Cytochrome c oxidase subunit 3 (274 aa).

Residues 1–15 (MTHQTHAYHMVNPSP) are Mitochondrial matrix-facing. Residues 16–34 (WPLTGALSALLMTSGLAMW) form a helical membrane-spanning segment. Residues 35–40 (FHFNSS) are Mitochondrial intermembrane-facing. Residues 41-66 (MLLSLGMLTNLLTMYQWWRDIVREGT) traverse the membrane as a helical segment. Over 67-72 (FQGHHT) the chain is Mitochondrial matrix. The helical transmembrane segment at 73 to 105 (SIVQKGLRYGMVLFIISEIFFFAGFFWAFYHSS) threads the bilayer. Residues 106–128 (LAPTPELGGCWPPTGIHPLNPLE) lie on the Mitochondrial intermembrane side of the membrane. Residues 129-152 (VPLLNTAVLLASGVSITWAHHSLM) traverse the membrane as a helical segment. Topologically, residues 153 to 155 (EGN) are mitochondrial matrix. A helical membrane pass occupies residues 156–183 (RVQMLQALLITITLGLYFTLLQASEYFE). The Mitochondrial intermembrane segment spans residues 184 to 190 (TSFTISD). Residues 191–223 (GVYGSTFFMATGFHGLHVIIGSTFLTVCFFRQL) form a helical membrane-spanning segment. At 224-232 (SFHFTSNHH) the chain is on the mitochondrial matrix side. The helical transmembrane segment at 233–256 (FGFEAAAWYWHFVDVVWLFLYVSI) threads the bilayer. Topologically, residues 257–274 (YWWGSYSFSIDPMQLTSN) are mitochondrial intermembrane.

The protein belongs to the cytochrome c oxidase subunit 3 family. As to quaternary structure, component of the cytochrome c oxidase (complex IV, CIV), a multisubunit enzyme composed of 14 subunits. The complex is composed of a catalytic core of 3 subunits MT-CO1, MT-CO2 and MT-CO3, encoded in the mitochondrial DNA, and 11 supernumerary subunits COX4I, COX5A, COX5B, COX6A, COX6B, COX6C, COX7A, COX7B, COX7C, COX8 and NDUFA4, which are encoded in the nuclear genome. The complex exists as a monomer or a dimer and forms supercomplexes (SCs) in the inner mitochondrial membrane with NADH-ubiquinone oxidoreductase (complex I, CI) and ubiquinol-cytochrome c oxidoreductase (cytochrome b-c1 complex, complex III, CIII), resulting in different assemblies (supercomplex SCI(1)III(2)IV(1) and megacomplex MCI(2)III(2)IV(2)).

The protein localises to the mitochondrion inner membrane. It carries out the reaction 4 Fe(II)-[cytochrome c] + O2 + 8 H(+)(in) = 4 Fe(III)-[cytochrome c] + 2 H2O + 4 H(+)(out). In terms of biological role, component of the cytochrome c oxidase, the last enzyme in the mitochondrial electron transport chain which drives oxidative phosphorylation. The respiratory chain contains 3 multisubunit complexes succinate dehydrogenase (complex II, CII), ubiquinol-cytochrome c oxidoreductase (cytochrome b-c1 complex, complex III, CIII) and cytochrome c oxidase (complex IV, CIV), that cooperate to transfer electrons derived from NADH and succinate to molecular oxygen, creating an electrochemical gradient over the inner membrane that drives transmembrane transport and the ATP synthase. Cytochrome c oxidase is the component of the respiratory chain that catalyzes the reduction of oxygen to water. Electrons originating from reduced cytochrome c in the intermembrane space (IMS) are transferred via the dinuclear copper A center (CU(A)) of subunit 2 and heme A of subunit 1 to the active site in subunit 1, a binuclear center (BNC) formed by heme A3 and copper B (CU(B)). The BNC reduces molecular oxygen to 2 water molecules using 4 electrons from cytochrome c in the IMS and 4 protons from the mitochondrial matrix. The protein is Cytochrome c oxidase subunit 3 (MT-CO3) of Lemur catta (Ring-tailed lemur).